Here is a 579-residue protein sequence, read N- to C-terminus: ATP-dependent lipid A-core flippase (579 aa).

The next 4 helical transmembrane spans lie at 24 to 44 (FLAA…LAEM), 61 to 81 (LMLP…TFLG), 147 to 167 (LFVI…TLIF), and 253 to 273 (LLVA…ALMA). Residues 25–306 (LAAVVGYAIY…LTEVNSTIQK (282 aa)) form the ABC transmembrane type-1 domain. An ABC transporter domain is found at 338–573 (VRFEGVRFRY…DGAYAALHQL (236 aa)). 372 to 379 (GRSGSGKS) lines the ATP pocket.

Belongs to the ABC transporter superfamily. Lipid exporter (TC 3.A.1.106) family. As to quaternary structure, homodimer.

The protein resides in the cell inner membrane. The enzyme catalyses ATP + H2O + lipid A-core oligosaccharideSide 1 = ADP + phosphate + lipid A-core oligosaccharideSide 2.. Functionally, involved in lipopolysaccharide (LPS) biosynthesis. Translocates lipid A-core from the inner to the outer leaflet of the inner membrane. Transmembrane domains (TMD) form a pore in the inner membrane and the ATP-binding domain (NBD) is responsible for energy generation. This is ATP-dependent lipid A-core flippase from Chromohalobacter salexigens (strain ATCC BAA-138 / DSM 3043 / CIP 106854 / NCIMB 13768 / 1H11).